The primary structure comprises 103 residues: MIILKDGYKEFADCMYYFLHYYIGYGRYTYSATNGSCDKGEYLDKRHNQCCNRCPPGEFAKVRCNGNDNTKCERCPPHTYTTIPIILMDVINVENAQPDHLIR.

A TNFR-Cys 1 repeat occupies 36 to 73 (SCDKGEYLDKRHNQCCNRCPPGEFAKVRCNGNDNTKCE). 3 cysteine pairs are disulfide-bonded: C37–C50, C51–C64, and C54–C72. The stretch at 74-103 (RCPPHTYTTIPIILMDVINVENAQPDHLIR) is one TNFR-Cys 2; truncated repeat.

The protein belongs to the poxviridae A53R protein family.

In Vaccinia virus (strain Western Reserve) (VACV), this protein is Truncated secreted TNF-receptor-like protein A53R.